The chain runs to 166 residues: Cytochrome c-type biogenesis protein CcmE (166 aa).

The Cytoplasmic segment spans residues 1–8 (MNAVRRKK). The helical; Signal-anchor for type II membrane protein transmembrane segment at 9 to 29 (LMWVMFTLAGAVIAVALVIYA) threads the bilayer. Residues 30-166 (IGKQTDYYFD…KLHETKTLQQ (137 aa)) are Periplasmic-facing. Positions 124 and 128 each coordinate heme. The interval 133–166 (VAKSMKENNRSGAVPSSEQYNPAEKLHETKTLQQ) is disordered. Positions 142–152 (RSGAVPSSEQY) are enriched in polar residues. Residues 156–166 (EKLHETKTLQQ) show a composition bias toward basic and acidic residues.

The protein belongs to the CcmE/CycJ family.

The protein resides in the cell inner membrane. Heme chaperone required for the biogenesis of c-type cytochromes. Transiently binds heme delivered by CcmC and transfers the heme to apo-cytochromes in a process facilitated by CcmF and CcmH. In Psychrobacter arcticus (strain DSM 17307 / VKM B-2377 / 273-4), this protein is Cytochrome c-type biogenesis protein CcmE.